A 278-amino-acid polypeptide reads, in one-letter code: 4-diphosphocytidyl-2-C-methyl-D-erythritol kinase (278 aa).

Lysine 9 is an active-site residue. 89–99 (PVASGIGGGSA) contributes to the ATP binding site. Residue aspartate 128 is part of the active site.

It belongs to the GHMP kinase family. IspE subfamily.

The enzyme catalyses 4-CDP-2-C-methyl-D-erythritol + ATP = 4-CDP-2-C-methyl-D-erythritol 2-phosphate + ADP + H(+). It functions in the pathway isoprenoid biosynthesis; isopentenyl diphosphate biosynthesis via DXP pathway; isopentenyl diphosphate from 1-deoxy-D-xylulose 5-phosphate: step 3/6. Functionally, catalyzes the phosphorylation of the position 2 hydroxy group of 4-diphosphocytidyl-2C-methyl-D-erythritol. The chain is 4-diphosphocytidyl-2-C-methyl-D-erythritol kinase from Cereibacter sphaeroides (strain ATCC 17029 / ATH 2.4.9) (Rhodobacter sphaeroides).